A 557-amino-acid chain; its full sequence is E3 ubiquitin-protein ligase rnf168 (557 aa).

The RING-type zinc-finger motif lies at 16 to 55; it reads CPICQEILLEPVTLPCKHTLCNPCFQMTVEKASLCCPFCR. The LR motif 1 motif lies at 112 to 130; it reads LCQPGEIRQEYEAEVSKIE. A UMI motif motif is present at residues 145-153; that stretch reads EDYIQKLLA. Short sequence motifs (MIU motif) lie at residues 170–193 and 422–445; these read MEEQ…VSNA and RRRQ…KELK. An LR motif 2 motif is present at residues 449–460; that stretch reads RGKGSPDEYELR. Residues 482-543 form a disordered region; the sequence is PLRKEIPVQD…GINVLKPINK (62 aa). Over residues 490–500 the composition is skewed to polar residues; sequence QDNSRNTQSEY. The span at 508–521 shows a compositional bias: basic residues; it reads PSRKNSVRSARVRQ.

The protein belongs to the RNF168 family. Monomer.

Its subcellular location is the nucleus. It carries out the reaction S-ubiquitinyl-[E2 ubiquitin-conjugating enzyme]-L-cysteine + [acceptor protein]-L-lysine = [E2 ubiquitin-conjugating enzyme]-L-cysteine + N(6)-ubiquitinyl-[acceptor protein]-L-lysine.. It functions in the pathway protein modification; protein ubiquitination. Its function is as follows. E3 ubiquitin-protein ligase required for accumulation of repair proteins to sites of DNA damage. Acts with ube2n/ubc13 to amplify the rnf8-dependent histone ubiquitination. Recruited to sites of DNA damage at double-strand breaks (DSBs) by binding to ubiquitinated histone H2A and ubiquitinates histone H2A and H2AX, leading to amplify the rnf8-dependent H2A ubiquitination and promoting the formation of 'Lys-63'-linked ubiquitin conjugates. This leads to concentrate ubiquitinated histones H2A and H2AX at DNA lesions to the threshold required for recruitment of tp53bp1 and brca1. Catalyzes monoubiquitination of 'Lys-13' and 'Lys-15' of nucleosomal histone H2A (H2AK13Ub and H2AK15Ub, respectively). This chain is E3 ubiquitin-protein ligase rnf168, found in Xenopus laevis (African clawed frog).